The sequence spans 231 residues: MLSTPVTSQLRLKEFQDVYEPAEDTFALLDALEKDAKKLRQMAEMKNLLTAEIGCGSGCASSFLKSGILKNKPIVHFMSDISNSACRASKITALNNRELYKDDNGLFITVQTSFLDGIRLGNGVDILIFNPPYVPTEFEEIPSEAATIASAWAGGTDGMDVTSTLLNQLKDILSQDGVFYMVAVARNKLHSICEILQKDGFIVNETLKRKAGRETLSILRIYRIGNTIWDE.

Residues 54–58 (GCGSG), aspartate 80, and asparagine 130 contribute to the S-adenosyl-L-methionine site. 130-133 (NPPY) is a binding site for substrate.

This sequence belongs to the eukaryotic/archaeal PrmC-related family. Heterodimer of mtq2-trm112. mtq2 is the catalytic subunit carrying the catalytic and the S-adenosyl L-methionine binding sites.

The protein resides in the cytoplasm. The protein localises to the nucleus. The enzyme catalyses L-glutaminyl-[peptide chain release factor] + S-adenosyl-L-methionine = N(5)-methyl-L-glutaminyl-[peptide chain release factor] + S-adenosyl-L-homocysteine + H(+). Methylates eRF1 on 'Gln-182' using S-adenosyl L-methionine as methyl donor. eRF1 needs to be complexed to eRF3 in its GTP-bound form to be efficiently methylated. The chain is eRF1 methyltransferase catalytic subunit mtq2 (mtq2) from Schizosaccharomyces pombe (strain 972 / ATCC 24843) (Fission yeast).